Consider the following 572-residue polypeptide: Methionine--tRNA ligase (572 aa).

Residues 11–21 carry the 'HIGH' region motif; sequence PYINGIKHLGN. Zn(2+)-binding residues include Cys143, Cys146, Cys156, and Cys159. Positions 346-350 match the 'KMSKS' region motif; it reads QFSTS. Position 349 (Thr349) interacts with ATP.

Belongs to the class-I aminoacyl-tRNA synthetase family. MetG type 1 subfamily. In terms of assembly, monomer. Requires Zn(2+) as cofactor.

The protein resides in the cytoplasm. The enzyme catalyses tRNA(Met) + L-methionine + ATP = L-methionyl-tRNA(Met) + AMP + diphosphate. Functionally, is required not only for elongation of protein synthesis but also for the initiation of all mRNA translation through initiator tRNA(fMet) aminoacylation. The polypeptide is Methionine--tRNA ligase (Ruegeria pomeroyi (strain ATCC 700808 / DSM 15171 / DSS-3) (Silicibacter pomeroyi)).